Consider the following 216-residue polypeptide: Probable nicotinate-nucleotide adenylyltransferase (216 aa).

It belongs to the NadD family.

The enzyme catalyses nicotinate beta-D-ribonucleotide + ATP + H(+) = deamido-NAD(+) + diphosphate. The protein operates within cofactor biosynthesis; NAD(+) biosynthesis; deamido-NAD(+) from nicotinate D-ribonucleotide: step 1/1. Its function is as follows. Catalyzes the reversible adenylation of nicotinate mononucleotide (NaMN) to nicotinic acid adenine dinucleotide (NaAD). The protein is Probable nicotinate-nucleotide adenylyltransferase of Shewanella pealeana (strain ATCC 700345 / ANG-SQ1).